Consider the following 55-residue polypeptide: Large ribosomal subunit protein bL33 (55 aa).

This sequence belongs to the bacterial ribosomal protein bL33 family. Part of the 50S ribosomal subunit. Contacts protein L35.

Its function is as follows. Binds the 23S rRNA and the E site tRNA. The protein is Large ribosomal subunit protein bL33 (rpmG) of Deinococcus radiodurans (strain ATCC 13939 / DSM 20539 / JCM 16871 / CCUG 27074 / LMG 4051 / NBRC 15346 / NCIMB 9279 / VKM B-1422 / R1).